A 105-amino-acid polypeptide reads, in one-letter code: Met repressor (105 aa).

Belongs to the MetJ family. Homodimer.

It localises to the cytoplasm. This regulatory protein, when combined with SAM (S-adenosylmethionine) represses the expression of the methionine regulon and of enzymes involved in SAM synthesis. The sequence is that of Met repressor from Actinobacillus pleuropneumoniae serotype 7 (strain AP76).